The sequence spans 462 residues: ESX-1 secretion system protein EccE1 (462 aa).

A run of 2 helical transmembrane segments spans residues 9–29 (FSTG…IAFL) and 34–54 (WWAG…TFYG).

The protein belongs to the EccE family. As to quaternary structure, part of the ESX-1 / type VII secretion system (T7SS), which is composed of cytosolic and membrane components. The ESX-1 membrane complex is composed of EccB1, EccCa1, EccCb1, EccD1 and EccE1.

The protein resides in the cell inner membrane. Part of the ESX-1 specialized secretion system, which delivers several virulence factors to host cells during infection, including the key virulence factors EsxA (ESAT-6) and EsxB (CFP-10). The sequence is that of ESX-1 secretion system protein EccE1 from Mycobacterium tuberculosis (strain CDC 1551 / Oshkosh).